Reading from the N-terminus, the 548-residue chain is Natural resistance-associated macrophage protein 1 (548 aa).

The segment covering 1 to 12 (MSGDTGTPNQGG) has biased composition (polar residues). The interval 1 to 38 (MSGDTGTPNQGGTRYGSISSPPSPGPQQAPPGGTYLSE) is disordered. Residues 1–55 (MSGDTGTPNQGGTRYGSISSPPSPGPQQAPPGGTYLSEKIPIPDTESGAFSLRKL) are Cytoplasmic-facing. A helical membrane pass occupies residues 56-73 (WAFTGPGFLMSIAFLDPG). Over 74–82 (NIESDLQAG) the chain is Extracellular. The helical transmembrane segment at 83–102 (AVAGFKLLWVLLWATVLGLL) threads the bilayer. The Cytoplasmic portion of the chain corresponds to 103 to 139 (CQRLAARLGVVTGKDLGEVCHLYYPKVPRTLLWLTIE). Residues 140-160 (LAIVGSDMQEVIGTAIAFSLL) traverse the membrane as a helical segment. The Extracellular segment spans residues 161 to 164 (SAGR). The chain crosses the membrane as a helical span at residues 165–184 (IPLWGGVLITIVDTFFFLFL). At 185–193 (DNYGLRKLE) the chain is on the cytoplasmic side. A helical transmembrane segment spans residues 194–214 (AFFGFLITIMALTFGYEYVVA). The Extracellular segment spans residues 215 to 237 (RPAQGALLQGLFLPSCPGCGQPE). The helical transmembrane segment at 238–256 (LLQAVGIVGAIIMPHNIYL) threads the bilayer. The Cytoplasmic segment spans residues 257 to 284 (HSSLVKSREVDRSRRADIREANMYFLIE). A helical membrane pass occupies residues 285-304 (ATIALSVSFFINLFVMAVFG). Residues 305–346 (QAFYKQTNQAAFNICANSSLHDYATIFPRDNLTVAVDIYQGG) lie on the Extracellular side of the membrane. 2 N-linked (GlcNAc...) asparagine glycosylation sites follow: asparagine 321 and asparagine 335. Residues 347–366 (VILGCLFGPAALYIWAVGLL) traverse the membrane as a helical segment. Residues 367 to 397 (AAGQSSTMTGTYAGQFVMEGFLKLRWSRFAR) are Cytoplasmic-facing. The helical transmembrane segment at 398 to 415 (VLLTRSCAIPPTVLLAVF) threads the bilayer. Over 416-426 (RDLQDLSGLND) the chain is Extracellular. A helical transmembrane segment spans residues 427–447 (LLNVLQSLLLPFAVLPILTFT). The Cytoplasmic portion of the chain corresponds to 448–463 (SMPALMQEFANGLVSK). A helical membrane pass occupies residues 464–485 (IITSSIMVLVCAVNLYFVISYV). Residues 486–493 (PSLPHPAY) lie on the Extracellular side of the membrane. A helical membrane pass occupies residues 494–513 (FSLVALLAAAYLGLTTYLVW). Residues 514-548 (TCLITQGATRLAHSSHQRFLYGLPGEDQEEGRTSG) are Cytoplasmic-facing.

Belongs to the NRAMP family.

The protein resides in the late endosome membrane. The protein localises to the lysosome membrane. The enzyme catalyses Zn(2+)(in) + H(+)(out) = Zn(2+)(out) + H(+)(in). It carries out the reaction Fe(2+)(in) + H(+)(out) = Fe(2+)(out) + H(+)(in). It catalyses the reaction Mn(2+)(in) + H(+)(out) = Mn(2+)(out) + H(+)(in). Macrophage-specific antiporter that fluxes metal ions in either direction against a proton gradient. Localized to late endosomal lysosomal membranes, delivers bivalent cations from the cytosol into these acidic compartments where they may directly affect antimicrobial activity. Involved in iron metabolism and host natural resistance to infection with intracellular parasites. Pathogen resistance involves sequestration of Fe(2+) and Mn(2+), cofactors of both prokaryotic and eukaryotic catalases and superoxide dismutases, not only to protect the macrophage against its own generation of reactive oxygen species, but to deny the cations to the pathogen for synthesis of its protective enzymes. The sequence is that of Natural resistance-associated macrophage protein 1 (SLC11A1) from Ovis aries (Sheep).